The chain runs to 360 residues: Alpha-2-macroglobulin receptor-associated protein (360 aa).

An N-terminal signal peptide occupies residues 1–28 (MAPRRERVSTLPRLQLLVLLLLPLMLVP). Phosphoserine occurs at positions 53 and 138. Residues 184–302 (EKIQEYNVLL…KHNHYQKQLE (119 aa)) are a coiled coil. The tract at residues 240–356 (RLRKVSHQGY…DLSSRVSRAR (117 aa)) is LDL receptor binding. A glycan (N-linked (GlcNAc...) asparagine) is linked at N271. A Prevents secretion from ER motif is present at residues 357 to 360 (HNEL).

This sequence belongs to the alpha-2-MRAP family. As to quaternary structure, interacts with the LRP1/alpha-2-macroglobulin receptor heavy and light chains; the interaction is transient and coincides with a reduction of ligand binding by the receptor. Interacts with LRP2/glycoprotein 330. Interacts with LRP1B; binding is followed by internalization and degradation. Interacts with LDLR. Interacts with SORL1. Interacts with LRP1; this interaction is followed by rapid internalization. Post-translationally, N-glycosylated. Highly expressed in PYS-2 parietal endoderm cells and in the kidney. The RNA level increased about 10-fold during differentiation of F9 embryonal carcinoma cells to parietal endoderm cells.

Its subcellular location is the rough endoplasmic reticulum lumen. It localises to the endoplasmic reticulum-Golgi intermediate compartment lumen. The protein localises to the golgi apparatus. The protein resides in the cis-Golgi network. It is found in the golgi apparatus lumen. Its subcellular location is the endosome lumen. It localises to the cell surface. Functionally, molecular chaperone for LDL receptor-related proteins that may regulate their ligand binding activity along the secretory pathway. This is Alpha-2-macroglobulin receptor-associated protein (Lrpap1) from Mus musculus (Mouse).